The sequence spans 187 residues: HTH-type transcriptional regulator NfxB (187 aa).

Residues 26 to 45 constitute a DNA-binding region (H-T-H motif); the sequence is LKELAEAAGVSKATLHRFCG.

In terms of biological role, confers resistance to guinolones. May negatively regulate the expression of genes that are associated with cell permeability to drugs. This chain is HTH-type transcriptional regulator NfxB (nfxB), found in Pseudomonas aeruginosa (strain ATCC 15692 / DSM 22644 / CIP 104116 / JCM 14847 / LMG 12228 / 1C / PRS 101 / PAO1).